The sequence spans 206 residues: Adenylate kinase (206 aa).

Residues 1–21 (MSQPKILLLGAPGAGKGTQSS) form a disordered region. Residue 13 to 18 (GAGKGT) coordinates ATP. Residues 33-61 (TTGDALRANKDMETEHGTPREFMEAGELV) are NMP. Residues Thr34, Arg39, 59–61 (ELV), 84–87 (GYPR), and Gln91 each bind AMP. Residues 120 to 153 (GRRMDPETGDIYHTEFNMPDDEEVRERLVQRDDD) form an LID region. Residues Arg121 and 130 to 131 (IY) each bind ATP. Arg150 and Arg161 together coordinate AMP. Ala189 serves as a coordination point for ATP.

Belongs to the adenylate kinase family. As to quaternary structure, monomer.

It localises to the cytoplasm. It catalyses the reaction AMP + ATP = 2 ADP. It functions in the pathway purine metabolism; AMP biosynthesis via salvage pathway; AMP from ADP: step 1/1. Catalyzes the reversible transfer of the terminal phosphate group between ATP and AMP. Plays an important role in cellular energy homeostasis and in adenine nucleotide metabolism. In Natronomonas pharaonis (strain ATCC 35678 / DSM 2160 / CIP 103997 / JCM 8858 / NBRC 14720 / NCIMB 2260 / Gabara) (Halobacterium pharaonis), this protein is Adenylate kinase.